Reading from the N-terminus, the 273-residue chain is Formamidopyrimidine-DNA glycosylase (273 aa).

P2 functions as the Schiff-base intermediate with DNA in the catalytic mechanism. Residue E3 is the Proton donor of the active site. K58 (proton donor; for beta-elimination activity) is an active-site residue. 2 residues coordinate DNA: H91 and R110. The segment at 238-272 (QVYGKTGQPCPRCASMIVKIKLGGRGTHLCPHCQK) adopts an FPG-type zinc-finger fold. The active-site Proton donor; for delta-elimination activity is the R262.

This sequence belongs to the FPG family. In terms of assembly, monomer. It depends on Zn(2+) as a cofactor.

The catalysed reaction is Hydrolysis of DNA containing ring-opened 7-methylguanine residues, releasing 2,6-diamino-4-hydroxy-5-(N-methyl)formamidopyrimidine.. It catalyses the reaction 2'-deoxyribonucleotide-(2'-deoxyribose 5'-phosphate)-2'-deoxyribonucleotide-DNA = a 3'-end 2'-deoxyribonucleotide-(2,3-dehydro-2,3-deoxyribose 5'-phosphate)-DNA + a 5'-end 5'-phospho-2'-deoxyribonucleoside-DNA + H(+). Involved in base excision repair of DNA damaged by oxidation or by mutagenic agents. Acts as a DNA glycosylase that recognizes and removes damaged bases. Has a preference for oxidized purines, such as 7,8-dihydro-8-oxoguanine (8-oxoG). Has AP (apurinic/apyrimidinic) lyase activity and introduces nicks in the DNA strand. Cleaves the DNA backbone by beta-delta elimination to generate a single-strand break at the site of the removed base with both 3'- and 5'-phosphates. The sequence is that of Formamidopyrimidine-DNA glycosylase from Streptococcus thermophilus (strain CNRZ 1066).